A 387-amino-acid polypeptide reads, in one-letter code: Zinc transporter 7 (387 aa).

Residues 1 to 37 (MLPLSIKDDEYKPAKFNLVVKLSGWFRSILADKTSRN) lie on the Cytoplasmic side of the membrane. A helical membrane pass occupies residues 38–58 (LFFFLCLNLSFAFVELLYGIW). Over 59-67 (SNSLGLISD) the chain is Lumenal. A helical membrane pass occupies residues 68–88 (SFHMFFDCTALLAGLAASVIS). At 89 to 102 (RWRSNDSFSYGYVR) the chain is on the cytoplasmic side. The helical transmembrane segment at 103–123 (AEVLAGFVNGLFLIFTAFFIF) threads the bilayer. At 124-140 (SEGVERALEPPDVHHDR) the chain is on the lumenal side. A helical transmembrane segment spans residues 141-161 (LLPVSIAGLLVNLVGIFVFQH). The his-rich loop stretch occupies residues 161–232 (HGGHGHSHGG…HDDQHCHDDH (72 aa)). The Cytoplasmic portion of the chain corresponds to 162-247 (GGHGHSHGGD…KGSSKQILQG (86 aa)). Residues 167-237 (SHGGDDHGHS…CHDDHTLTPG (71 aa)) are disordered. Over residues 187–201 (GHSHGGHGHSHGGHG) the composition is skewed to basic residues. Basic and acidic residues-rich tracts occupy residues 202-214 (HSHE…DHGH) and 221-233 (HSHD…DDHT). The chain crosses the membrane as a helical span at residues 248-268 (VFLHIVADTLGSVGVIISAIL). The Lumenal portion of the chain corresponds to 269–273 (MQKYD). Residues 274-294 (LMIADPICSMLIALLIGVSVV) form a helical membrane-spanning segment. Over 295-387 (PLLRESIGIL…LYVQIEVAAM (93 aa)) the chain is Cytoplasmic.

Belongs to the cation diffusion facilitator (CDF) transporter (TC 2.A.4) family. SLC30A subfamily. Homooligomer.

The protein localises to the golgi apparatus membrane. The protein resides in the cytoplasmic vesicle. It is found in the golgi apparatus. Its subcellular location is the trans-Golgi network. It localises to the sarcoplasmic reticulum. The protein localises to the mitochondrion. It catalyses the reaction Zn(2+)(in) = Zn(2+)(out). Its function is as follows. Zinc ion transporter mediating zinc entry from the cytosol into the lumen of organelles along the secretory pathway. By contributing to zinc ion homeostasis within the early secretory pathway, regulates the activation and folding of enzymes like alkaline phosphatases. This Danio rerio (Zebrafish) protein is Zinc transporter 7 (slc30a7).